A 575-amino-acid chain; its full sequence is Hemagglutinin-neuraminidase (575 aa).

A compositionally biased stretch (basic and acidic residues) spans 1–10 (MDGDRGKRDS). A disordered region spans residues 1–27 (MDGDRGKRDSYWSTSPSGSTTKPASGW). The Intravirion segment spans residues 1-37 (MDGDRGKRDSYWSTSPSGSTTKPASGWERSSKADTWL). The segment at 10 to 14 (SYWST) is incorporation in virion. Residues 11 to 23 (YWSTSPSGSTTKP) are compositionally biased toward polar residues. A helical; Signal-anchor for type II membrane protein membrane pass occupies residues 38–58 (LILSFTQWALSIATVIICIII). Residues 59–140 (SARQGYSMKE…RQELTQHCES (82 aa)) are interaction with F protein. Residues 59-575 (SARQGYSMKE…SIPKLCKAES (517 aa)) lie on the Virion surface side of the membrane. N-linked (GlcNAc...) asparagine; by host glycosylation occurs at Asn-77. 4 disulfide bridges follow: Cys-192–Cys-216, Cys-258–Cys-271, Cys-357–Cys-469, and Cys-463–Cys-473. The involved in neuraminidase activity stretch occupies residues 254 to 259 (NRKSCS). N-linked (GlcNAc...) asparagine; by host glycosylation is found at Asn-499 and Asn-511. A disulfide bridge links Cys-535 with Cys-544.

It belongs to the paramyxoviruses hemagglutinin-neuraminidase family. As to quaternary structure, homotetramer; composed of disulfide-linked homodimers. Interacts with F protein trimer. Post-translationally, N-glycosylated; glycans consist of a mixture of high mannose-type oligosaccharides and of complex-type oligosaccharides.

The protein localises to the virion membrane. It localises to the host cell membrane. The catalysed reaction is Hydrolysis of alpha-(2-&gt;3)-, alpha-(2-&gt;6)-, alpha-(2-&gt;8)- glycosidic linkages of terminal sialic acid residues in oligosaccharides, glycoproteins, glycolipids, colominic acid and synthetic substrates.. Attaches the virus to sialic acid-containing cell receptors and thereby initiating infection. Binding of HN protein to the receptor induces a conformational change that allows the F protein to trigger virion/cell membranes fusion. Functionally, neuraminidase activity ensures the efficient spread of the virus by dissociating the mature virions from the neuraminic acid containing glycoproteins. This chain is Hemagglutinin-neuraminidase (HN), found in Sendai virus (strain Z) (SeV).